Reading from the N-terminus, the 206-residue chain is MARYLGPKLKLSRREGTDLFLKSGVRAIDSKCKIEQPPGQHGARKPRLSDYGVQLREKQKVRRIYGVLERQFRNYYKEAARLKGNTGENLLQLLEGRLDNVVYRMGFGATRAESRQLVSHKAIMVNGRVVNIASYQVTPNDVVSIREKAKKQSRVRASLELAEQREKPTWLEVDAAKMEGVFKRIPERTDLSADINEHLIVELYSK.

One can recognise an S4 RNA-binding domain in the interval 96–157 (GRLDNVVYRM…KAKKQSRVRA (62 aa)).

The protein belongs to the universal ribosomal protein uS4 family. In terms of assembly, part of the 30S ribosomal subunit. Contacts protein S5. The interaction surface between S4 and S5 is involved in control of translational fidelity.

In terms of biological role, one of the primary rRNA binding proteins, it binds directly to 16S rRNA where it nucleates assembly of the body of the 30S subunit. Functionally, with S5 and S12 plays an important role in translational accuracy. This chain is Small ribosomal subunit protein uS4, found in Sodalis glossinidius (strain morsitans).